Reading from the N-terminus, the 551-residue chain is RCC1 and BTB domain-containing protein 2 (551 aa).

6 RCC1 repeats span residues N64 to T115, D117 to S169, G171 to D222, T223 to D274, G276 to S326, and G328 to E382. The BTB domain maps to A394–P457.

It is found in the cytoplasmic vesicle. The protein localises to the secretory vesicle. The protein resides in the acrosome. This Rattus norvegicus (Rat) protein is RCC1 and BTB domain-containing protein 2 (Rcbtb2).